We begin with the raw amino-acid sequence, 273 residues long: MAIVKCKPTSAGRRHVVKIVNPELHKGKPYAPLLDTKSKTGGRNNYGRITTRHIGGGHKQHYRLIDFKRNKLDIPAVVERLEYDPNRSANIALVLYKDGERRYILAPKGLSVGDQIQAGINSPIKVGNSLPMRNIPVGSTVHNVELKPGKGGQIARSAGAYVQIIAREGNYVTLRLRSGEMRKVLAECVATIGEVGNSEHMLRVLGKAGANRWRGIRPTVRGTAMNPVDHPHGGGEGRNFGKHPVTPWGVQTKGKKTRHNKRTDKYIVRRRGK.

Residues 221-262 form a disordered region; it reads RGTAMNPVDHPHGGGEGRNFGKHPVTPWGVQTKGKKTRHNKR. Residues 253-262 are compositionally biased toward basic residues; that stretch reads KGKKTRHNKR.

This sequence belongs to the universal ribosomal protein uL2 family. Part of the 50S ribosomal subunit. Forms a bridge to the 30S subunit in the 70S ribosome.

Functionally, one of the primary rRNA binding proteins. Required for association of the 30S and 50S subunits to form the 70S ribosome, for tRNA binding and peptide bond formation. It has been suggested to have peptidyltransferase activity; this is somewhat controversial. Makes several contacts with the 16S rRNA in the 70S ribosome. The protein is Large ribosomal subunit protein uL2 of Haemophilus influenzae (strain ATCC 51907 / DSM 11121 / KW20 / Rd).